Here is a 159-residue protein sequence, read N- to C-terminus: Small ribosomal subunit protein uS4 (159 aa).

The region spanning 106 to 158 (RRLQTIVYRMGLAKSIYHARQLIVHGHIAIEGRRVTSPGFLVPRELEDKITLV) is the S4 RNA-binding domain.

This sequence belongs to the universal ribosomal protein uS4 family. Part of the 30S ribosomal subunit. Contacts protein S5. The interaction surface between S4 and S5 is involved in control of translational fidelity.

One of the primary rRNA binding proteins, it binds directly to 16S rRNA where it nucleates assembly of the body of the 30S subunit. Functionally, with S5 and S12 plays an important role in translational accuracy. The sequence is that of Small ribosomal subunit protein uS4 from Pyrobaculum arsenaticum (strain DSM 13514 / JCM 11321 / PZ6).